Reading from the N-terminus, the 195-residue chain is uncharacterized protein (195 aa).

Disordered regions lie at residues 1–54 (MPKG…SNKI) and 173–195 (LAGA…KPIS). A compositionally biased stretch (basic and acidic residues) spans 7-20 (KPNEKKEELEKFAK). The span at 45–54 (QNDSSSSNKI) shows a compositional bias: polar residues. Positions 48–97 (SSSSNKIVLSQAEKDLLRTELDKTEEEISTLKQVLSARQKHAAELKRKLG) form a coiled coil.

Belongs to the TPD52 family.

This is an uncharacterized protein from Caenorhabditis elegans.